We begin with the raw amino-acid sequence, 690 residues long: Xylosyl- and glucuronyltransferase LARGE2 (690 aa).

Residues 1 to 8 lie on the Cytoplasmic side of the membrane; the sequence is MLPRGRPR. The helical; Signal-anchor for type II membrane protein transmembrane segment at 9-29 threads the bilayer; sequence AMGAAVLLLLLLLVVGFFLFG. Topologically, residues 30–690 are lumenal; it reads RDPDYGLGTT…TALQQARSRA (661 aa). N-linked (GlcNAc...) asparagine glycans are attached at residues asparagine 51 and asparagine 78. A xylosyltransferase activity region spans residues 68 to 343; the sequence is LHVAIVCAGY…FLGYDGKLLR (276 aa). 2 residues coordinate Mn(2+): aspartate 172 and aspartate 174. N-linked (GlcNAc...) asparagine glycosylation is present at asparagine 202. The glucuronyltransferase activity stretch occupies residues 344–686; sequence RELFGCPNQF…LKYLTALQQA (343 aa). Mn(2+)-binding residues include aspartate 492 and aspartate 494.

The protein in the C-terminal section; belongs to the glycosyltransferase 49 family. It in the N-terminal section; belongs to the glycosyltransferase 8 family. This sequence belongs to the glycosyltransferase 8 family. In terms of assembly, interacts with B4GAT1. The cofactor is Mn(2+). In terms of tissue distribution, highly expressed in the testis and kidney, but weakly expressed in the heart and brain. Expressed during embryogenesis from 7 dpc.

The protein localises to the golgi apparatus membrane. It carries out the reaction 3-O-[beta-D-GlcA-(1-&gt;3)-beta-D-Xyl-(1-&gt;4)-Rib-ol-P-Rib-ol-P-3-beta-D-GalNAc-(1-&gt;3)-beta-D-GlcNAc-(1-&gt;4)-(O-6-P-alpha-D-Man)]-Thr-[protein] + UDP-alpha-D-xylose = 3-O-[alpha-D-Xyl-(1-&gt;3)-beta-D-GlcA-(1-&gt;4)-beta-D-Xyl-(1-&gt;4)-Rib-ol-P-Rib-ol-P-3-beta-D-GalNAc-(1-&gt;3)-beta-D-GlcNAc-(1-&gt;4)-(O-6-P-alpha-D-Man)]-Thr-[protein] + UDP + H(+). It catalyses the reaction 3-O-{(1-&gt;[3)-alpha-D-Xyl-(1-&gt;3)-beta-D-GlcA-(1-&gt;](n)-4)-beta-D-Xyl-(1-&gt;4)-Rib-ol-P-Rib-ol-P-3-beta-D-GalNAc-(1-&gt;3)-beta-D-GlcNAc-(1-&gt;4)-O-6-P-alpha-D-Man}-L-Thr-[protein] + UDP-alpha-D-glucuronate = 3-O-{beta-D-GlcA-(1-&gt;[3)-alpha-D-Xyl-(1-&gt;3)-beta-D-GlcA-(1-&gt;](n)-4)-beta-D-Xyl-(1-&gt;4)-Rib-ol-P-Rib-ol-P-3-beta-D-GalNAc-(1-&gt;3)-beta-D-GlcNAc-(1-&gt;4)-O-6-P-alpha-D-Man}-L-Thr-[protein] + UDP + H(+). The catalysed reaction is 3-O-{beta-D-GlcA-(1-&gt;[3)-alpha-D-Xyl-(1-&gt;3)-beta-D-GlcA-(1-&gt;](n)-4)-beta-D-Xyl-(1-&gt;4)-Rib-ol-P-Rib-ol-P-3-beta-D-GalNAc-(1-&gt;3)-beta-D-GlcNAc-(1-&gt;4)-O-6-P-alpha-D-Man}-L-Thr-[protein] + UDP-alpha-D-xylose = 3-O-{(1-&gt;[3)-alpha-D-Xyl-(1-&gt;3)-beta-D-GlcA-(1-&gt;](n+1)-4)-beta-D-Xyl-(1-&gt;4)-Rib-ol-P-Rib-ol-P-3-beta-D-GalNAc-(1-&gt;3)-beta-D-GlcNAc-(1-&gt;4)-O-6-P-alpha-D-Man}-L-Thr-[protein] + UDP + H(+). It participates in protein modification; protein glycosylation. In terms of biological role, bifunctional glycosyltransferase with both alpha-1,3-xylosyltransferase and beta-1,3-glucuronyltransferase activities involved in the maturation of alpha-dystroglycan (DAG1) by glycosylation leading to DAG1 binding to laminin G-like domain-containing extracellular proteins with high affinity and in a phosphorylated-O-mannosyl trisaccharide dependent manner. Elongates the glucuronyl-beta-1,4-xylose-beta disaccharide primer structure by adding repeating units [-3-Xylose-alpha-1,3-GlcA-beta-1-] to produce a heteropolysaccharide. Supports the maturation of DAG1 more effectively than LARGE1. In addition, can modify both heparan sulfate (HS)- and chondroitin/dermatan sulfate (CS/DS)-proteoglycans (PGs), namely GPC4, with a glycosaminoglycan (GAG)-like polysaccharide composed of xylose and glucuronic acid to confer laminin binding. The sequence is that of Xylosyl- and glucuronyltransferase LARGE2 from Mus musculus (Mouse).